The chain runs to 55 residues: ATP synthase F(0) complex subunit 8 (55 aa).

Residues 4–24 traverse the membrane as a helical segment; it reads LNPAPWFAILVFSWLVFLTVI. The interval 36 to 55 is disordered; the sequence is EPTSQSTEKTKPEPWNWPWH.

It belongs to the ATPase protein 8 family. In terms of assembly, component of the ATP synthase complex composed at least of ATP5F1A/subunit alpha, ATP5F1B/subunit beta, ATP5MC1/subunit c (homooctomer), MT-ATP6/subunit a, MT-ATP8/subunit 8, ATP5ME/subunit e, ATP5MF/subunit f, ATP5MG/subunit g, ATP5MK/subunit k, ATP5MJ/subunit j, ATP5F1C/subunit gamma, ATP5F1D/subunit delta, ATP5F1E/subunit epsilon, ATP5PF/subunit F6, ATP5PB/subunit b, ATP5PD/subunit d, ATP5PO/subunit OSCP. ATP synthase complex consists of a soluble F(1) head domain (subunits alpha(3) and beta(3)) - the catalytic core - and a membrane F(0) domain - the membrane proton channel (subunits c, a, 8, e, f, g, k and j). These two domains are linked by a central stalk (subunits gamma, delta, and epsilon) rotating inside the F1 region and a stationary peripheral stalk (subunits F6, b, d, and OSCP).

The protein resides in the mitochondrion membrane. Subunit 8, of the mitochondrial membrane ATP synthase complex (F(1)F(0) ATP synthase or Complex V) that produces ATP from ADP in the presence of a proton gradient across the membrane which is generated by electron transport complexes of the respiratory chain. ATP synthase complex consist of a soluble F(1) head domain - the catalytic core - and a membrane F(1) domain - the membrane proton channel. These two domains are linked by a central stalk rotating inside the F(1) region and a stationary peripheral stalk. During catalysis, ATP synthesis in the catalytic domain of F(1) is coupled via a rotary mechanism of the central stalk subunits to proton translocation. In vivo, can only synthesize ATP although its ATP hydrolase activity can be activated artificially in vitro. Part of the complex F(0) domain. The sequence is that of ATP synthase F(0) complex subunit 8 from Salvelinus alpinus (Arctic char).